A 288-amino-acid polypeptide reads, in one-letter code: Adenylate kinase (288 aa).

Gly65–Thr70 provides a ligand contact to ATP. Residues Ala85–Val114 form an NMP region. AMP is bound by residues Thr86, Arg91, Lys112–Val114, Gly142–Arg145, and Gln149. The segment at Gly178–Asp226 is LID. Arg179 provides a ligand contact to ATP. Arg223 and Arg234 together coordinate AMP. Gly262 is a binding site for ATP.

The protein belongs to the adenylate kinase family. Monomer.

The protein resides in the cytoplasm. It carries out the reaction AMP + ATP = 2 ADP. Catalyzes the reversible transfer of the terminal phosphate group between ATP and AMP. Plays an important role in cellular energy homeostasis and in adenine nucleotide metabolism. The sequence is that of Adenylate kinase (ADK) from Solanum tuberosum (Potato).